The sequence spans 388 residues: Succinate--CoA ligase [ADP-forming] subunit beta (388 aa).

The 237-residue stretch at 9–245 (KELLKSYGLP…KSQENERELK (237 aa)) folds into the ATP-grasp domain. ATP-binding positions include Lys46, 53–55 (GRG), Glu100, Tyr103, and Glu108. Residues Asn200 and Asp214 each coordinate Mg(2+). Substrate is bound by residues Asn265 and 322-324 (GIV).

This sequence belongs to the succinate/malate CoA ligase beta subunit family. As to quaternary structure, heterotetramer of two alpha and two beta subunits. Mg(2+) serves as cofactor.

It carries out the reaction succinate + ATP + CoA = succinyl-CoA + ADP + phosphate. The catalysed reaction is GTP + succinate + CoA = succinyl-CoA + GDP + phosphate. Its pathway is carbohydrate metabolism; tricarboxylic acid cycle; succinate from succinyl-CoA (ligase route): step 1/1. Its function is as follows. Succinyl-CoA synthetase functions in the citric acid cycle (TCA), coupling the hydrolysis of succinyl-CoA to the synthesis of either ATP or GTP and thus represents the only step of substrate-level phosphorylation in the TCA. The beta subunit provides nucleotide specificity of the enzyme and binds the substrate succinate, while the binding sites for coenzyme A and phosphate are found in the alpha subunit. The chain is Succinate--CoA ligase [ADP-forming] subunit beta from Psychrobacter arcticus (strain DSM 17307 / VKM B-2377 / 273-4).